Consider the following 159-residue polypeptide: Bacterioferritin (159 aa).

A Ferritin-like diiron domain is found at 1 to 145; it reads MQGDPDVLRL…TQLALMGQLG (145 aa). 2 residues coordinate Fe cation: Glu-18 and Glu-51. Met-52 provides a ligand contact to heme b. Residues His-54, Glu-94, Glu-127, and His-130 each contribute to the Fe cation site.

Belongs to the bacterioferritin family. Homooligomer of 24 subunits, arranged as 12 dimers, that are packed together to form an approximately spherical molecule with a central cavity, in which large amounts of iron can be deposited. The cofactor is heme b.

The protein localises to the cytoplasm. It localises to the cytosol. The protein resides in the membrane. The catalysed reaction is 4 Fe(2+) + O2 + 4 H(+) = 4 Fe(3+) + 2 H2O. It catalyses the reaction Fe(2+)(in) = Fe(2+)(out). Its function is as follows. Iron-storage protein, whose ferroxidase center binds Fe(2+), oxidizes it using dioxygen to Fe(3+), and participates in the subsequent Fe(3+) oxide mineral core formation within the central cavity of the BFR protein shell. Probably plays a crucial role in the intracellular existence of this organism by functioning as a temporary depository for iron in iron deprivation. The chain is Bacterioferritin (bfr) from Mycobacterium leprae (strain TN).